The primary structure comprises 269 residues: Tryptophan synthase alpha chain (269 aa).

Residues Glu-49 and Asp-60 each act as proton acceptor in the active site.

This sequence belongs to the TrpA family. As to quaternary structure, tetramer of two alpha and two beta chains.

The enzyme catalyses (1S,2R)-1-C-(indol-3-yl)glycerol 3-phosphate + L-serine = D-glyceraldehyde 3-phosphate + L-tryptophan + H2O. It participates in amino-acid biosynthesis; L-tryptophan biosynthesis; L-tryptophan from chorismate: step 5/5. Its function is as follows. The alpha subunit is responsible for the aldol cleavage of indoleglycerol phosphate to indole and glyceraldehyde 3-phosphate. This Enterobacter sp. (strain 638) protein is Tryptophan synthase alpha chain.